The primary structure comprises 835 residues: Lon protease (835 aa).

Residues 36–234 enclose the Lon N-terminal domain; the sequence is VHVFPLLRRP…KALILLKKEL (199 aa). 387 to 394 lines the ATP pocket; sequence GPPGVGKT. Residues 646 to 828 form the Lon proteolytic domain; that stretch reads RTPVGVCMGL…DQVFKISFPN (183 aa). Active-site residues include serine 734 and lysine 777.

The protein belongs to the peptidase S16 family. Homohexamer. Organized in a ring with a central cavity.

It is found in the cytoplasm. The catalysed reaction is Hydrolysis of proteins in presence of ATP.. ATP-dependent serine protease that mediates the selective degradation of mutant and abnormal proteins as well as certain short-lived regulatory proteins. Required for cellular homeostasis and for survival from DNA damage and developmental changes induced by stress. Degrades polypeptides processively to yield small peptide fragments that are 5 to 10 amino acids long. Binds to DNA in a double-stranded, site-specific manner. This is Lon protease from Protochlamydia amoebophila (strain UWE25).